A 448-amino-acid chain; its full sequence is Methionine aminopeptidase 2 (448 aa).

A disordered region spans residues 1–47; it reads MTSSVDKVSQKVADVKLGSSKSTKNNKSKGKGKSNKNQVVEDDDEDD. The segment covering 24–34 has biased composition (basic residues); sequence KNNKSKGKGKS. H198 is a substrate binding site. A divalent metal cation-binding residues include D218, D229, and H298. Position 306 (H306) interacts with substrate. A divalent metal cation-binding residues include E331 and E429.

The protein belongs to the peptidase M24A family. Methionine aminopeptidase eukaryotic type 2 subfamily. It depends on Co(2+) as a cofactor. Zn(2+) serves as cofactor. The cofactor is Mn(2+). Requires Fe(2+) as cofactor.

The protein localises to the cytoplasm. The catalysed reaction is Release of N-terminal amino acids, preferentially methionine, from peptides and arylamides.. Cotranslationally removes the N-terminal methionine from nascent proteins. The N-terminal methionine is often cleaved when the second residue in the primary sequence is small and uncharged (Met-Ala-, Cys, Gly, Pro, Ser, Thr, or Val). This chain is Methionine aminopeptidase 2, found in Komagataella phaffii (strain GS115 / ATCC 20864) (Yeast).